Reading from the N-terminus, the 848-residue chain is MNNNDLFQASRRRFLAQLGGLTVAGMLGPSLLTSRRATAAQAATEAVISKEGILTGSHWGAIRATVKDGRFVAAKPFELDKYPSKMIAGLPDHVHNAARIRYPMVRVDWLRKRHLSDTSQRGDNRFVRVSWDEALDMFYEELERVQKTHGPSALLTASGWQSTGMFHNASGMLAKAIALHGNSVGTGGDYSTGAAQVILPRVVGSMEVYEQQTSWPLVLQNSKTIVLWGSDLLKNQQANWWCPDHDVYEYYAQLKAKVAAGEIEVISIDPVVTSTHEYLGREHVKHIAVNPQTDVPLQLALAHTLYSENLYDKNFLANYCVGFEQFLPYLLGEKDGQPKDAAWAEKLTGIDAETIRGLARQMAANRTQIIAGWCVQRMQHGEQWAWMIVVLAAMLGQIGLPGGGFGFGWHYNGAGTPGRKGVILSGFSGSTSIPPVHDNSDYKGYSSTIPIARFIDAILEPGKVINWNGKSVKLPPLKMCIFAGTNPFHRHQQINRIIEGWRKLETVIAIDNQWTSTCRFADIVLPATTQFERNDLDQYGNHSNRGIIAMKQVVPPQFEARNDFDIFRELCRRFNREEAFTEGLDEMGWLKRIWQEGVQQGKGRGVHLPAFDDFWNNKEYVEFDHPQMFVRHQAFREDPDLEPLGTPSGLIEIYSKTIADMNYDDCQGHPMWFEKIERSHGGPGSQTYPLHLQSVHPDFRLHSQLCESETLRQQYTVAGKEPVFINPQDASARGIRNGDVVRVFNARGQVLAGAVVSDRYAPGVARIHEGAWHDPDKGGEPGALCKYGNPNVLTIDIGTSQLAQATSAHTTLVEIEKCNGTVEQVTAFNGPVEMVAQCEYVPASQVKL.

A signal peptide (tat-type signal) is located at residues 1-39 (MNNNDLFQASRRRFLAQLGGLTVAGMLGPSLLTSRRATA). S191 serves as a coordination point for Mo-bis(molybdopterin guanine dinucleotide).

The protein belongs to the prokaryotic molybdopterin-containing oxidoreductase family. As to quaternary structure, interacts with the N-terminal domain of TorC. Requires Mo-bis(molybdopterin guanine dinucleotide) as cofactor. Predicted to be exported by the Tat system. The position of the signal peptide cleavage has not been experimentally proven.

It localises to the periplasm. The enzyme catalyses trimethylamine + 2 Fe(III)-[cytochrome c] + H2O = trimethylamine N-oxide + 2 Fe(II)-[cytochrome c] + 3 H(+). Reduces trimethylamine-N-oxide (TMAO) into trimethylamine; an anaerobic reaction coupled to energy-yielding reactions. This Escherichia coli O157:H7 protein is Trimethylamine-N-oxide reductase 1 (torA).